The following is a 293-amino-acid chain: 4-diphosphocytidyl-2-C-methyl-D-erythritol kinase (293 aa).

The active site involves Lys-10. 96–106 (PVASGIGGGSS) serves as a coordination point for ATP. Residue Asp-138 is part of the active site.

Belongs to the GHMP kinase family. IspE subfamily.

The catalysed reaction is 4-CDP-2-C-methyl-D-erythritol + ATP = 4-CDP-2-C-methyl-D-erythritol 2-phosphate + ADP + H(+). It participates in isoprenoid biosynthesis; isopentenyl diphosphate biosynthesis via DXP pathway; isopentenyl diphosphate from 1-deoxy-D-xylulose 5-phosphate: step 3/6. In terms of biological role, catalyzes the phosphorylation of the position 2 hydroxy group of 4-diphosphocytidyl-2C-methyl-D-erythritol. The sequence is that of 4-diphosphocytidyl-2-C-methyl-D-erythritol kinase from Chelativorans sp. (strain BNC1).